A 199-amino-acid chain; its full sequence is Recombination protein RecR (199 aa).

The C4-type zinc-finger motif lies at 58–73; the sequence is CVNCGNIGTGDLCEIC. The 96-residue stretch at 81–176 folds into the Toprim domain; that stretch reads GEICVVEDVA…TLSSLAQGVP (96 aa).

The protein belongs to the RecR family.

In terms of biological role, may play a role in DNA repair. It seems to be involved in an RecBC-independent recombinational process of DNA repair. It may act with RecF and RecO. In Jannaschia sp. (strain CCS1), this protein is Recombination protein RecR.